The primary structure comprises 215 residues: Pyridoxine/pyridoxamine 5'-phosphate oxidase (215 aa).

Residues 9 to 12 (RRDY) and lysine 69 each bind substrate. FMN is bound by residues 64 to 69 (RVLLLK), 79 to 80 (FT), lysine 86, and glutamine 108. Substrate contacts are provided by tyrosine 126, arginine 130, and serine 134. FMN contacts are provided by residues 143 to 144 (QS) and tryptophan 188. Residue 194–196 (RLH) participates in substrate binding. Arginine 198 contacts FMN.

Belongs to the pyridoxamine 5'-phosphate oxidase family. As to quaternary structure, homodimer. The cofactor is FMN.

The enzyme catalyses pyridoxamine 5'-phosphate + O2 + H2O = pyridoxal 5'-phosphate + H2O2 + NH4(+). It catalyses the reaction pyridoxine 5'-phosphate + O2 = pyridoxal 5'-phosphate + H2O2. It functions in the pathway cofactor metabolism; pyridoxal 5'-phosphate salvage; pyridoxal 5'-phosphate from pyridoxamine 5'-phosphate: step 1/1. Its pathway is cofactor metabolism; pyridoxal 5'-phosphate salvage; pyridoxal 5'-phosphate from pyridoxine 5'-phosphate: step 1/1. Functionally, catalyzes the oxidation of either pyridoxine 5'-phosphate (PNP) or pyridoxamine 5'-phosphate (PMP) into pyridoxal 5'-phosphate (PLP). In Pseudomonas putida (strain GB-1), this protein is Pyridoxine/pyridoxamine 5'-phosphate oxidase.